A 304-amino-acid chain; its full sequence is Probable WRKY transcription factor 13 (304 aa).

The disordered stretch occupies residues Q141 to G190. Residues I149–G159 are compositionally biased toward acidic residues. The WRKY DNA-binding region spans S217–S282.

It belongs to the WRKY group II-c family.

The protein localises to the nucleus. Functionally, transcription factor. Interacts specifically with the W box (5'-(T)TGAC[CT]-3'), a frequently occurring elicitor-responsive cis-acting element. The polypeptide is Probable WRKY transcription factor 13 (WRKY13) (Arabidopsis thaliana (Mouse-ear cress)).